Reading from the N-terminus, the 462-residue chain is General transcription factor IIH subunit 4 (462 aa).

The protein belongs to the TFB2 family. As to quaternary structure, component of the 7-subunit TFIIH core complex composed of XPB/ERCC3, XPD/ERCC2, GTF2H1, GTF2H2, GTF2H3, GTF2H4 and GTF2H5, which is active in NER. The core complex associates with the 3-subunit CDK-activating kinase (CAK) module composed of CCNH/cyclin H, CDK7 and MNAT1 to form the 10-subunit holoenzyme (holo-TFIIH) active in transcription. Part of TBP-based Pol II pre-initiation complex (PIC), in which Pol II core assembles with general transcription factors and other specific initiation factors including GTF2E1, GTF2E2, GTF2F1, GTF2F2, TCEA1, ERCC2, ERCC3, GTF2H2, GTF2H3, GTF2H4, GTF2H5, GTF2A1, GTF2A2, GTF2B and TBP; this large multi-subunit PIC complex mediates DNA unwinding and targets Pol II core to the transcription start site where the first phosphodiester bond forms.

It is found in the nucleus. Component of the general transcription and DNA repair factor IIH (TFIIH) core complex, which is involved in general and transcription-coupled nucleotide excision repair (NER) of damaged DNA and, when complexed to CAK, in RNA transcription by RNA polymerase II. In NER, TFIIH acts by opening DNA around the lesion to allow the excision of the damaged oligonucleotide and its replacement by a new DNA fragment. In transcription, TFIIH has an essential role in transcription initiation. When the pre-initiation complex (PIC) has been established, TFIIH is required for promoter opening and promoter escape. Phosphorylation of the C-terminal tail (CTD) of the largest subunit of RNA polymerase II by the kinase module CAK controls the initiation of transcription. Functionally, stimulates the ATPase activity of TFIIH subunit XPB/ERCC3. The protein is General transcription factor IIH subunit 4 (GTF2H4) of Homo sapiens (Human).